The chain runs to 64 residues: Beta-toxin Tf1 (64 aa).

Residues 1–62 (KEGYLMDHEG…VWERATNRCG (62 aa)) form the LCN-type CS-alpha/beta domain. Disulfide bonds link cysteine 11–cysteine 61, cysteine 15–cysteine 37, cysteine 23–cysteine 42, and cysteine 27–cysteine 44. The residue at position 61 (cysteine 61) is a Cysteine amide.

The protein belongs to the long (4 C-C) scorpion toxin superfamily. Sodium channel inhibitor family. Beta subfamily. As to expression, expressed by the venom gland.

Its subcellular location is the secreted. Beta toxins bind voltage-independently at site-4 of sodium channels (Nav) and shift the voltage of activation toward more negative potentials thereby affecting sodium channel activation and promoting spontaneous and repetitive firing. The sequence is that of Beta-toxin Tf1 from Tityus fasciolatus (Central Brazilian scorpion).